The chain runs to 479 residues: Aspartyl/glutamyl-tRNA(Asn/Gln) amidotransferase subunit B (479 aa).

This sequence belongs to the GatB/GatE family. GatB subfamily. Heterotrimer of A, B and C subunits.

The enzyme catalyses L-glutamyl-tRNA(Gln) + L-glutamine + ATP + H2O = L-glutaminyl-tRNA(Gln) + L-glutamate + ADP + phosphate + H(+). It carries out the reaction L-aspartyl-tRNA(Asn) + L-glutamine + ATP + H2O = L-asparaginyl-tRNA(Asn) + L-glutamate + ADP + phosphate + 2 H(+). In terms of biological role, allows the formation of correctly charged Asn-tRNA(Asn) or Gln-tRNA(Gln) through the transamidation of misacylated Asp-tRNA(Asn) or Glu-tRNA(Gln) in organisms which lack either or both of asparaginyl-tRNA or glutaminyl-tRNA synthetases. The reaction takes place in the presence of glutamine and ATP through an activated phospho-Asp-tRNA(Asn) or phospho-Glu-tRNA(Gln). The polypeptide is Aspartyl/glutamyl-tRNA(Asn/Gln) amidotransferase subunit B (Mesoplasma florum (strain ATCC 33453 / NBRC 100688 / NCTC 11704 / L1) (Acholeplasma florum)).